We begin with the raw amino-acid sequence, 284 residues long: Tropomyosin Por p 1.0101 (284 aa).

M1 is modified (N-acetylmethionine). The tract at residues 1 to 21 (MDAIKKKMQAMKLEKDDAMDR) is disordered. Positions 1-280 (MDAIKKKMQA…TDELDQAFSE (280 aa)) form a coiled coil. The segment covering 12 to 21 (KLEKDDAMDR) has biased composition (basic and acidic residues).

The protein belongs to the tropomyosin family. As to quaternary structure, homodimer. Expressed in muscle (at protein level). Expressed in pincer muscles.

Tropomyosin, in association with the troponin complex, plays a central role in the calcium dependent regulation of muscle contraction. This chain is Tropomyosin Por p 1.0101, found in Portunus pelagicus (Blue swimmer crab).